Consider the following 735-residue polypeptide: Protein RETICULATA-RELATED 5, chloroplastic (735 aa).

Residues 1–75 (MKPTTNGGLL…TRRAILVAPP (75 aa)) constitute a chloroplast transit peptide. The next 2 membrane-spanning stretches (helical) occupy residues 519 to 539 (ASVVDFFTVWLPAPTLSFISY) and 582 to 602 (VIIGGLKLAGVGVVSSFAAVG). Polar residues predominate over residues 714 to 726 (ASQSTVEYSTTEE). The segment at 714–735 (ASQSTVEYSTTEEASMDDLKNQ) is disordered.

It belongs to the RETICULATA family.

It is found in the plastid. The protein localises to the chloroplast membrane. May play a role in leaf development. The sequence is that of Protein RETICULATA-RELATED 5, chloroplastic from Arabidopsis thaliana (Mouse-ear cress).